Consider the following 48-residue polypeptide: Large ribosomal subunit protein bL32 (48 aa).

The disordered stretch occupies residues valine 28 to tyrosine 48.

Belongs to the bacterial ribosomal protein bL32 family.

The sequence is that of Large ribosomal subunit protein bL32 from Campylobacter concisus (strain 13826).